Reading from the N-terminus, the 882-residue chain is MGPWSRSLSALCCCCRCNPWLCREPEPCIPGFGAESYTFTVPRRNLERGRVLGRVSFEGCAGLPRTVYVSDDTRFKVHTDGVLTVRRPVHLHRPELSFLVHAWDSTHRKLSTKVTLEVSAHHHHHHSHHDSPSGTQTEVLTFPGPHHGLRRQKRDWVIPPISCPENEKGPFPKSLVQIKSNKEKETQVFYSITGQRADTPPVGVFIIERETGWLKVTQPLDREQIAKYILFSHAVSSNGQAIEEPMEIVITVTDQNDNKPQFTQEVFKASALEGALPGTSVMQVTATDIDDEVNTYTAAIGYTIPAQDPMLPHNKMFTINKETGVISVLTTGLDRESFPTYTLMVQAADLNGEGLSTTATAVITVLDTNDNAPRFNPTTYVGSVPENEANVAITTLTVTDADDPNTPAWEAVYTVLNDNEKQFIVVTDPVTNEGTLKTAKGLDFEAKQQYILYVAVTNVAPFEVTLPTSTATVTVDVIDVNEAPIFVPPQKRVEVPEDFGVGLEITSYTAREPDTFMEQKITYRIWRDTANWLEINPETGAISTRAELDREDVDHVKNSTYTALIIATDNGSPPATGTGTLLLFLDDVNDNGPVPEPRTMDFCQRNPEPHIININDPDLPPNTSPFTAELTHGASVNWTIEYNDQERESLILKPKKTLELGDHKINLKLIDNQNKDQVTTLDVHVCDCDGIVSNCRKARPAEAGLQVPAILGILGGILAFLILILLLLLLVRRRRVVKEPLLPPEDDTRDNVYYYDEEGGGEEDQDFDLSQLHRGLDARPEVTRNDVAPTLMSVPQYRPRPANPDEIGNFIDENLKAADSDPTAPPYDSLLVFDYEGSGSEAATLSSLNSSESDQDQDYDYLNEWGNRFKKLADMYGGGEDD.

Positions 1-23 (MGPWSRSLSALCCCCRCNPWLCR) are cleaved as a signal peptide. Residues 24–154 (EPEPCIPGFG…PHHGLRRQKR (131 aa)) constitute a propeptide that is removed on maturation. A disordered region spans residues 117–137 (EVSAHHHHHHSHHDSPSGTQT). Cadherin domains follow at residues 154–262 (RDWV…KPQF), 263–375 (TQEV…APRF), 376–486 (NPTT…APIF), 487–595 (VPPQ…GPVP), and 594–702 (VPEP…RPAE). Residues 155 to 709 (DWVIPPISCP…PAEAGLQVPA (555 aa)) lie on the Extracellular side of the membrane. Ser-280 carries an O-linked (Man...) serine glycan. Thr-285, Thr-358, Thr-470, Thr-472, and Thr-509 each carry an O-linked (Man...) threonine glycan. N-linked (GlcNAc...) asparagine glycosylation occurs at Asn-558. Residues Thr-576, Thr-578, and Thr-580 are each glycosylated (O-linked (Man...) threonine). N-linked (GlcNAc...) asparagine glycosylation is present at Asn-637. The chain crosses the membrane as a helical span at residues 710 to 730 (ILGILGGILAFLILILLLLLL). Residues 731–882 (VRRRRVVKEP…ADMYGGGEDD (152 aa)) lie on the Cytoplasmic side of the membrane. The tract at residues 747-767 (DTRDNVYYYDEEGGGEEDQDF) is disordered. Tyr-753, Tyr-754, and Tyr-755 each carry phosphotyrosine; by SRC. Over residues 755-767 (YDEEGGGEEDQDF) the composition is skewed to acidic residues. A required for binding CTNND1 and PSEN1 region spans residues 758 to 769 (EGGGEEDQDFDL). Phosphoserine occurs at positions 770, 793, 838, 840, and 846. The required for binding alpha, beta and gamma catenins stretch occupies residues 811-882 (IDENLKAADS…ADMYGGGEDD (72 aa)).

As to quaternary structure, homodimer; disulfide-linked. Component of an E-cadherin/ catenin adhesion complex composed of at least E-cadherin/CDH1, beta-catenin/CTNNB1 or gamma-catenin/JUP, and potentially alpha-catenin/CTNNA1; the complex is located to adherens junctions. Found in a complex composed of CDH1, RAP1A and PKP3; PKP3 acts as a scaffold protein within the complex, the complex is required for CDH1 localization to mature desmosome cell junctions. Interacts with the TRPV4 and CTNNB1 complex. Interacts with CTNND1. The stable association of CTNNA1 is controversial as CTNNA1 was shown not to bind to F-actin when assembled in the complex. Alternatively, the CTNNA1-containing complex may be linked to F-actin by other proteins such as LIMA1. Interaction with PSEN1, cleaves CDH1 resulting in the disassociation of cadherin-based adherens junctions (CAJs). Interacts with AJAP1 and DLGAP5. Interacts with TBC1D2. Interacts with CAV1. Interacts with PIP5K1C. Interacts with RAB8B. Interacts with DDR1; this stabilizes CDH1 at the cell surface and inhibits its internalization. Interacts with RAPGEF2. Interacts with KLRG1. Forms a ternary complex composed of ADAM10, CADH1 and EPHA4; within the complex, CADH1 is cleaved by ADAM10 which disrupts adherens junctions. Interacts with SPEF1. Interacts with CTNNB1 and PKP2. Interacts with AMOTL2; the interaction may facilitate binding of radial actin fibers to cell junction complexes. Interacts with DSG3; the interaction is required for CDH1 localization to developing adherens junctions. In terms of processing, during apoptosis or with calcium influx, cleaved by a membrane-bound metalloproteinase (ADAM10), PS1/gamma-secretase and caspase-3. Processing by the metalloproteinase, induced by calcium influx, causes disruption of cell-cell adhesion and the subsequent release of beta-catenin into the cytoplasm. The residual membrane-tethered cleavage product is rapidly degraded via an intracellular proteolytic pathway. Cleavage by caspase-3 releases the cytoplasmic tail resulting in disintegration of the actin microfilament system. The gamma-secretase-mediated cleavage promotes disassembly of adherens junctions. During development of the cochlear organ of Corti, cleavage by ADAM10 at adherens junctions promotes pillar cell separation. N-glycosylation at Asn-637 is essential for expression, folding and trafficking. Addition of bisecting N-acetylglucosamine by MGAT3 modulates its cell membrane location. Post-translationally, ubiquitinated by a SCF complex containing SKP2, which requires prior phosphorylation by CK1/CSNK1A1. Ubiquitinated by CBLL1/HAKAI, requires prior phosphorylation at Tyr-754. In terms of processing, O-glycosylated. O-manosylated by TMTC1, TMTC2, TMTC3 or TMTC4. Thr-285 and Thr-509 are O-mannosylated by TMTC2 or TMTC4 but not TMTC1 or TMTC3.

It is found in the cell junction. The protein resides in the adherens junction. It localises to the cell membrane. Its subcellular location is the endosome. The protein localises to the golgi apparatus. It is found in the trans-Golgi network. The protein resides in the cytoplasm. It localises to the desmosome. Functionally, cadherins are calcium-dependent cell adhesion proteins. They preferentially interact with themselves in a homophilic manner in connecting cells; cadherins may thus contribute to the sorting of heterogeneous cell types. CDH1 is involved in mechanisms regulating cell-cell adhesions, mobility and proliferation of epithelial cells. Promotes organization of radial actin fiber structure and cellular response to contractile forces, via its interaction with AMOTL2 which facilitates anchoring of radial actin fibers to CDH1 junction complexes at the cell membrane. Plays a role in the early stages of desmosome cell-cell junction formation via facilitating the recruitment of DSG2 and DSP to desmosome plaques. Has a potent invasive suppressor role. It is a ligand for integrin alpha-E/beta-7. In terms of biological role, E-Cad/CTF2 promotes non-amyloidogenic degradation of Abeta precursors. Has a strong inhibitory effect on APP C99 and C83 production. This Bos taurus (Bovine) protein is Cadherin-1 (CDH1).